The primary structure comprises 113 residues: Putative pterin-4-alpha-carbinolamine dehydratase (113 aa).

The protein belongs to the pterin-4-alpha-carbinolamine dehydratase family.

The enzyme catalyses (4aS,6R)-4a-hydroxy-L-erythro-5,6,7,8-tetrahydrobiopterin = (6R)-L-erythro-6,7-dihydrobiopterin + H2O. This Pelodictyon phaeoclathratiforme (strain DSM 5477 / BU-1) protein is Putative pterin-4-alpha-carbinolamine dehydratase.